Reading from the N-terminus, the 181-residue chain is UPF0232 protein MAP_0004 (181 aa).

The segment covering 1–11 (MSDDQSPSPSG) has biased composition (polar residues). 2 disordered regions span residues 1-70 (MSDD…PQPL) and 161-181 (APSWRKGPRHIAGRGPRDTYG). Residues 18-39 (LVRRTLEEARAAARAQGKDAGR) are compositionally biased toward basic and acidic residues. Residues 40–50 (GRAAAPTPRRV) are compositionally biased toward low complexity.

This sequence belongs to the UPF0232 family.

This Mycolicibacterium paratuberculosis (strain ATCC BAA-968 / K-10) (Mycobacterium paratuberculosis) protein is UPF0232 protein MAP_0004.